The following is a 136-amino-acid chain: Histone H3.2 (136 aa).

The segment at 1 to 43 is disordered; it reads MARTKQTARKSTGGKAPRKQLATKAARKSAPATGGVKKPHRFR. Residue lysine 5 is modified to N6-methylated lysine. N6-acetyllysine; alternate is present on lysine 10. Lysine 10 carries the N6-methylated lysine; alternate modification. The residue at position 11 (serine 11) is a Phosphoserine. Residue threonine 12 is modified to Phosphothreonine. Lysine 15 bears the N6-acetyllysine mark. N6-acetyllysine; alternate occurs at positions 19 and 24. Lysine 19 and lysine 24 each carry N6-methylated lysine; alternate. Lysine 28 is modified (N6-methylated lysine). A Phosphoserine modification is found at serine 29. N6-methylated lysine is present on lysine 37.

It belongs to the histone H3 family. In terms of assembly, the nucleosome is a histone octamer containing two molecules each of H2A, H2B, H3 and H4 assembled in one H3-H4 heterotetramer and two H2A-H2B heterodimers. The octamer wraps approximately 147 bp of DNA. Post-translationally, acetylation is generally linked to gene activation. Can be acetylated to form H3K9ac, H3K14ac, H3K18ac and H3K23ac. H3K9ac could compete with H3K9me and prevent gene silencing. H3K9ac is restricted to euchromatin. Methylated to form mainly H3K4me, H3K9me, H3K18me, H3K23me, H3K27me and H3K36me. H3K4me1/2/3, H3K9me3, H3K27me3 and H3K36me1/2/3 are typical marks for euchromatin, whereas heterochromatic chromocenters are enriched in H3K9me1/2 and H3K27me1/2. H2BK143ub1 is probably prerequisite for H3K4me. In terms of processing, can be phosphorylated to form H3S10ph, H3T11ph and H3S28ph.

It localises to the nucleus. The protein localises to the chromosome. Its function is as follows. Core component of nucleosome. Nucleosomes wrap and compact DNA into chromatin, limiting DNA accessibility to the cellular machineries which require DNA as a template. Histones thereby play a central role in transcription regulation, DNA repair, DNA replication and chromosomal stability. DNA accessibility is regulated via a complex set of post-translational modifications of histones, also called histone code, and nucleosome remodeling. In Encephalartos altensteinii (Altenstein's bread tree), this protein is Histone H3.2.